The primary structure comprises 184 residues: ATP synthase subunit b, chloroplastic (184 aa).

The helical transmembrane segment at I26–V48 threads the bilayer.

The protein belongs to the ATPase B chain family. As to quaternary structure, F-type ATPases have 2 components, F(1) - the catalytic core - and F(0) - the membrane proton channel. F(1) has five subunits: alpha(3), beta(3), gamma(1), delta(1), epsilon(1). F(0) has four main subunits: a(1), b(1), b'(1) and c(10-14). The alpha and beta chains form an alternating ring which encloses part of the gamma chain. F(1) is attached to F(0) by a central stalk formed by the gamma and epsilon chains, while a peripheral stalk is formed by the delta, b and b' chains.

Its subcellular location is the plastid. It localises to the chloroplast thylakoid membrane. Its function is as follows. F(1)F(0) ATP synthase produces ATP from ADP in the presence of a proton or sodium gradient. F-type ATPases consist of two structural domains, F(1) containing the extramembraneous catalytic core and F(0) containing the membrane proton channel, linked together by a central stalk and a peripheral stalk. During catalysis, ATP synthesis in the catalytic domain of F(1) is coupled via a rotary mechanism of the central stalk subunits to proton translocation. Functionally, component of the F(0) channel, it forms part of the peripheral stalk, linking F(1) to F(0). This Calycanthus floridus var. glaucus (Eastern sweetshrub) protein is ATP synthase subunit b, chloroplastic.